A 498-amino-acid chain; its full sequence is Angiopoietin-4 (498 aa).

A signal peptide spans 1–22 (MPSPPAMLLGGLLLIVASTTVA). The segment at 51–80 (EPEPCPPEPEAFGGSNSLQRDSPAATLNLG) is disordered. Residues 85-109 (QRMRQLEKMLENNTQWLQKLERYIQ) adopt a coiled-coil conformation. Residues Asn-96, Asn-126, Asn-158, Asn-247, Asn-295, Asn-306, Asn-332, and Asn-424 are each glycosylated (N-linked (GlcNAc...) asparagine). Residues 186-254 (HELHRLQGHN…SSNSSLLQRQ (69 aa)) adopt a coiled-coil conformation. Residues 277-497 (RAADQLFQDC…TTRMMVRPSG (221 aa)) enclose the Fibrinogen C-terminal domain. The cysteines at positions 286 and 315 are disulfide-linked. Cysteines 439 and 452 form a disulfide.

In terms of assembly, homodimer; disulfide-linked. Interacts with TEK/TIE2.

It localises to the secreted. Its function is as follows. Binds to TEK/TIE2, modulating ANGPT1 signaling. Can induce tyrosine phosphorylation of TEK/TIE2. Promotes endothelial cell survival, migration and angiogenesis. The chain is Angiopoietin-4 (ANGPT4) from Bos taurus (Bovine).